A 712-amino-acid chain; its full sequence is Phosphatase and actin regulator 4 (712 aa).

Disordered regions lie at residues 1–22 and 90–405; these read MGQA…GQPT and RGLL…EVPK. An RPEL 1 repeat occupies 72 to 97; sequence EVLERKISMRKPREELVKRGLLLEDS. The span at 114-124 shows a compositional bias: polar residues; it reads NGHTTLIGSTR. A phosphoserine mark is found at serine 125, serine 127, serine 140, and serine 156. Positions 136 to 152 are enriched in basic and acidic residues; the sequence is ERIASLRKPVPEEEPKK. Residues 198–230 show a composition bias toward low complexity; sequence ATSSGSLARPSSSASTTAITTAPAATMAATNPA. Residues 233-243 are compositionally biased toward polar residues; sequence VHSSGPPSQAP. The segment covering 245-267 has biased composition (low complexity); that stretch reads TLPAAPASTHTTATLSLTHTGPA. Phosphoserine is present on residues serine 282, serine 303, and serine 353. Residues 345 to 357 are compositionally biased toward low complexity; the sequence is SEPLLTPSSSPLP. Over residues 358–371 the composition is skewed to pro residues; the sequence is AHIPPEPPQSPPFP. Residue serine 436 is modified to Phosphoserine. Threonine 441 carries the phosphothreonine modification. A phosphoserine mark is found at serine 452, serine 462, serine 473, serine 524, serine 526, serine 567, and serine 600. Residues 507–557 form a disordered region; sequence VIPKLPQCLQEEEEGKESDSDSEGPIQYRDEEDEDESHHSALANKVKRKDT. Residues 516 to 528 show a composition bias toward acidic residues; it reads QEEEEGKESDSDS. 2 RPEL repeats span residues 593-618 and 631-656; these read NTLI…QPKN and RRLT…RFNE. The disordered stretch occupies residues 602–626; that stretch reads RPTPEELEQRNILQPKNEADRQAEK. Serine 638 bears the Phosphoserine mark.

It belongs to the phosphatase and actin regulator family. In terms of assembly, binds PPP1CA and actin.

Its subcellular location is the cytoplasm. It localises to the cell projection. The protein localises to the lamellipodium. Its function is as follows. Regulator of protein phosphatase 1 (PP1) required for neural tube and optic fissure closure, and enteric neural crest cell (ENCCs) migration during development. Acts as an activator of PP1 by interacting with PPP1CA and preventing phosphorylation of PPP1CA at 'Thr-320'. During neural tube closure, localizes to the ventral neural tube and activates PP1, leading to down-regulate cell proliferation within cranial neural tissue and the neural retina. Also acts as a regulator of migration of enteric neural crest cells (ENCCs) by activating PP1, leading to dephosphorylation and subsequent activation of cofilin (COF1 or COF2) and repression of the integrin signaling through the RHO/ROCK pathway. This chain is Phosphatase and actin regulator 4 (PHACTR4), found in Bos taurus (Bovine).